The sequence spans 144 residues: Large ribosomal subunit protein uL13 (144 aa).

Belongs to the universal ribosomal protein uL13 family. Part of the 50S ribosomal subunit.

Functionally, this protein is one of the early assembly proteins of the 50S ribosomal subunit, although it is not seen to bind rRNA by itself. It is important during the early stages of 50S assembly. The protein is Large ribosomal subunit protein uL13 of Clostridium perfringens (strain 13 / Type A).